A 281-amino-acid polypeptide reads, in one-letter code: Undecaprenyl-diphosphatase (281 aa).

Helical transmembrane passes span Ile4–Ile24, Ala46–Phe63, Phe83–Lys103, Val108–Trp128, Ala187–Tyr207, Glu222–Val242, and Phe257–Ile277.

This sequence belongs to the UppP family.

It is found in the cell inner membrane. The catalysed reaction is di-trans,octa-cis-undecaprenyl diphosphate + H2O = di-trans,octa-cis-undecaprenyl phosphate + phosphate + H(+). In terms of biological role, catalyzes the dephosphorylation of undecaprenyl diphosphate (UPP). Confers resistance to bacitracin. The polypeptide is Undecaprenyl-diphosphatase (Polynucleobacter necessarius subsp. necessarius (strain STIR1)).